Reading from the N-terminus, the 598-residue chain is Elongation factor 4 (598 aa).

A tr-type G domain is found at 4 to 181; that stretch reads KKIRNFAIIA…AIVNLIPPPQ (178 aa). GTP is bound by residues 16–21 and 128–131; these read DHGKST and NKID.

It belongs to the TRAFAC class translation factor GTPase superfamily. Classic translation factor GTPase family. LepA subfamily.

The protein resides in the cell membrane. The catalysed reaction is GTP + H2O = GDP + phosphate + H(+). Functionally, required for accurate and efficient protein synthesis under certain stress conditions. May act as a fidelity factor of the translation reaction, by catalyzing a one-codon backward translocation of tRNAs on improperly translocated ribosomes. Back-translocation proceeds from a post-translocation (POST) complex to a pre-translocation (PRE) complex, thus giving elongation factor G a second chance to translocate the tRNAs correctly. Binds to ribosomes in a GTP-dependent manner. The polypeptide is Elongation factor 4 (Mesomycoplasma hyopneumoniae (strain J / ATCC 25934 / NCTC 10110) (Mycoplasma hyopneumoniae)).